Reading from the N-terminus, the 128-residue chain is Sulfurtransferase TusD (128 aa).

Catalysis depends on cysteine 78, which acts as the Cysteine persulfide intermediate.

This sequence belongs to the DsrE/TusD family. In terms of assembly, heterohexamer, formed by a dimer of trimers. The hexameric TusBCD complex contains 2 copies each of TusB, TusC and TusD. The TusBCD complex interacts with TusE.

The protein localises to the cytoplasm. Part of a sulfur-relay system required for 2-thiolation of 5-methylaminomethyl-2-thiouridine (mnm(5)s(2)U) at tRNA wobble positions. Accepts sulfur from TusA and transfers it in turn to TusE. The sequence is that of Sulfurtransferase TusD from Buchnera aphidicola subsp. Schizaphis graminum (strain Sg).